Here is a 252-residue protein sequence, read N- to C-terminus: MSQAVSYAILVLTIIAFLLTAAALCTPAWQVVYAREIRQWVQSGLWLSCQTRPNGMYSCTYTFSHDDFNTYFSDEVSGFRTPSFYPWQRTLFHIYLISQAFAMLSLISFCVSVSHKESKMPNILRSVFLVLAAVIAFGCLIAFAVYSYMVEYRFFHVSVSGIYEKHRGYSWYIALTGAFVYLVAIILSVVHVLLQARNSNTTMSRQNINSSLQSDFFEYQYHPNRSMESFEDRFAMRTLPPVPRQEKKTTVF.

4 helical membrane-spanning segments follow: residues 7–29, 91–111, 127–147, and 173–193; these read YAIL…TPAW, LFHI…SFCV, VFLV…AVYS, and IALT…VHVL.

This sequence belongs to the Clc family.

The protein localises to the membrane. This chain is Clc-like protein 2 (clc-2), found in Caenorhabditis elegans.